A 207-amino-acid polypeptide reads, in one-letter code: Superoxide dismutase [Mn] (207 aa).

Mn(2+) contacts are provided by His-28, His-76, Asp-160, and His-164.

The protein belongs to the iron/manganese superoxide dismutase family. Mn(2+) is required as a cofactor.

It catalyses the reaction 2 superoxide + 2 H(+) = H2O2 + O2. In terms of biological role, destroys superoxide anion radicals which are normally produced within the cells and which are toxic to biological systems. This is Superoxide dismutase [Mn] (sodA) from Mycolicibacterium fortuitum (Mycobacterium fortuitum).